The sequence spans 275 residues: Ribosomal RNA small subunit methyltransferase A (275 aa).

The S-adenosyl-L-methionine site is built by Asn21, Leu23, Gly48, Glu69, Asp94, and Asn115.

Belongs to the class I-like SAM-binding methyltransferase superfamily. rRNA adenine N(6)-methyltransferase family. RsmA subfamily.

It is found in the cytoplasm. It catalyses the reaction adenosine(1518)/adenosine(1519) in 16S rRNA + 4 S-adenosyl-L-methionine = N(6)-dimethyladenosine(1518)/N(6)-dimethyladenosine(1519) in 16S rRNA + 4 S-adenosyl-L-homocysteine + 4 H(+). Specifically dimethylates two adjacent adenosines (A1518 and A1519) in the loop of a conserved hairpin near the 3'-end of 16S rRNA in the 30S particle. May play a critical role in biogenesis of 30S subunits. This is Ribosomal RNA small subunit methyltransferase A from Clostridium botulinum (strain Okra / Type B1).